Consider the following 206-residue polypeptide: Ribosomal RNA small subunit methyltransferase G (206 aa).

S-adenosyl-L-methionine is bound by residues G71, F76, 122-123 (AE), and R135.

Belongs to the methyltransferase superfamily. RNA methyltransferase RsmG family.

Its subcellular location is the cytoplasm. Functionally, specifically methylates the N7 position of a guanine in 16S rRNA. This Bacteroides thetaiotaomicron (strain ATCC 29148 / DSM 2079 / JCM 5827 / CCUG 10774 / NCTC 10582 / VPI-5482 / E50) protein is Ribosomal RNA small subunit methyltransferase G.